A 1044-amino-acid polypeptide reads, in one-letter code: GRB10-interacting GYF protein 1 (1044 aa).

Residues Ser24, Ser28, Ser137, and Ser157 each carry the phosphoserine modification. Disordered stretches follow at residues 104-290 (GKGA…DGLP) and 306-424 (ASGA…LEDE). Basic and acidic residues-rich tracts occupy residues 148 to 179 (NPRE…RSGF) and 186 to 203 (PRKE…SLRE). At Ser228 the chain carries Phosphoserine. Basic and acidic residues-rich tracts occupy residues 237-265 (GWRE…EDGR) and 316-332 (GPKE…FRGL). Residues 333–350 (EEEEEEEEEPSEGVDEER) are compositionally biased toward acidic residues. Ser343 is modified (phosphoserine). Low complexity predominate over residues 366-379 (NSSSPSSLPALGPL). Residues 389–403 (AVEKELPPAEGDELR) are compositionally biased toward basic and acidic residues. Ser408 is subject to Phosphoserine. The GYF domain occupies 476–524 (ARKWFYKDPQGEIQGPFTTQEMAEWFQAGYFSMSLLVKRGCDEGFQPLG). Phosphoserine occurs at positions 540 and 634. The span at 692–706 (KREEEERKRREEKRR) shows a compositional bias: basic and acidic residues. Disordered stretches follow at residues 692–721 (KREE…RQEE), 820–842 (EAGP…LGLW), 855–883 (SLGL…RKKT), 966–987 (QKAS…QEAW), 1000–1019 (NHST…RALM), and 1024–1044 (PSIL…VDDY). Positions 829-839 (DKSGGSSGGNL) are enriched in gly residues. 2 stretches are compositionally biased toward low complexity: residues 855 to 877 (SLGL…LSGR) and 970 to 984 (QQRQ…QQQQ). Ser863 carries the phosphoserine modification.

This sequence belongs to the GIGYF family. As to quaternary structure, interacts with GRB10. This transient binding is increased under IGF1 stimulation and leads to recruitment of GIGYF1/GRB10 complex to IGF1 receptor. Interacts with DDX6. In terms of tissue distribution, ubiquitous. Lower expression in skeletal muscle, liver and testis.

Its function is as follows. May act cooperatively with GRB10 to regulate tyrosine kinase receptor signaling. May increase IGF1 receptor phosphorylation under IGF1 stimulation as well as phosphorylation of IRS1 and SHC1. This Mus musculus (Mouse) protein is GRB10-interacting GYF protein 1 (Gigyf1).